The chain runs to 417 residues: Gamma-glutamyl phosphate reductase (417 aa).

Belongs to the gamma-glutamyl phosphate reductase family.

The protein resides in the cytoplasm. The catalysed reaction is L-glutamate 5-semialdehyde + phosphate + NADP(+) = L-glutamyl 5-phosphate + NADPH + H(+). It functions in the pathway amino-acid biosynthesis; L-proline biosynthesis; L-glutamate 5-semialdehyde from L-glutamate: step 2/2. Its function is as follows. Catalyzes the NADPH-dependent reduction of L-glutamate 5-phosphate into L-glutamate 5-semialdehyde and phosphate. The product spontaneously undergoes cyclization to form 1-pyrroline-5-carboxylate. The sequence is that of Gamma-glutamyl phosphate reductase from Haemophilus influenzae (strain ATCC 51907 / DSM 11121 / KW20 / Rd).